The following is a 239-amino-acid chain: Ribonuclease 3 (239 aa).

The RNase III domain occupies 12-137 (RAKLEGLIGH…LIAAIYLDGG (126 aa)). Position 50 (Glu50) interacts with Mg(2+). The active site involves Asp54. The Mg(2+) site is built by Asp123 and Glu126. Glu126 is an active-site residue. The DRBM domain occupies 162–231 (DAKTELQEWS…ATKMLEREGI (70 aa)).

It belongs to the ribonuclease III family. As to quaternary structure, homodimer. Mg(2+) serves as cofactor.

It is found in the cytoplasm. It carries out the reaction Endonucleolytic cleavage to 5'-phosphomonoester.. In terms of biological role, digests double-stranded RNA. Involved in the processing of primary rRNA transcript to yield the immediate precursors to the large and small rRNAs (23S and 16S). Processes some mRNAs, and tRNAs when they are encoded in the rRNA operon. Processes pre-crRNA and tracrRNA of type II CRISPR loci if present in the organism. This Rhizobium leguminosarum bv. trifolii (strain WSM2304) protein is Ribonuclease 3.